The following is a 554-amino-acid chain: Glucose-6-phosphate isomerase (554 aa).

Glu359 serves as the catalytic Proton donor. Residues His390 and Lys518 contribute to the active site.

The protein belongs to the GPI family.

The protein resides in the cytoplasm. It catalyses the reaction alpha-D-glucose 6-phosphate = beta-D-fructose 6-phosphate. The protein operates within carbohydrate biosynthesis; gluconeogenesis. It participates in carbohydrate degradation; glycolysis; D-glyceraldehyde 3-phosphate and glycerone phosphate from D-glucose: step 2/4. Catalyzes the reversible isomerization of glucose-6-phosphate to fructose-6-phosphate. This chain is Glucose-6-phosphate isomerase, found in Pseudomonas syringae pv. tomato (strain ATCC BAA-871 / DC3000).